Reading from the N-terminus, the 58-residue chain is Small ribosomal subunit protein bS21 (58 aa).

The disordered stretch occupies residues 36–58; that stretch reads EHYEKPSVKRKKKSEAARRRKYR. Basic residues predominate over residues 43–58; sequence VKRKKKSEAARRRKYR.

This sequence belongs to the bacterial ribosomal protein bS21 family.

This chain is Small ribosomal subunit protein bS21, found in Symbiobacterium thermophilum (strain DSM 24528 / JCM 14929 / IAM 14863 / T).